A 356-amino-acid polypeptide reads, in one-letter code: Phosphoserine aminotransferase (356 aa).

Arginine 41 serves as a coordination point for L-glutamate. Pyridoxal 5'-phosphate-binding positions include 75–76 (AS), tryptophan 99, threonine 147, aspartate 166, and glutamine 189. An N6-(pyridoxal phosphate)lysine modification is found at lysine 190. 231 to 232 (NT) is a binding site for pyridoxal 5'-phosphate.

The protein belongs to the class-V pyridoxal-phosphate-dependent aminotransferase family. SerC subfamily. In terms of assembly, homodimer. Pyridoxal 5'-phosphate is required as a cofactor.

It is found in the cytoplasm. The enzyme catalyses O-phospho-L-serine + 2-oxoglutarate = 3-phosphooxypyruvate + L-glutamate. It carries out the reaction 4-(phosphooxy)-L-threonine + 2-oxoglutarate = (R)-3-hydroxy-2-oxo-4-phosphooxybutanoate + L-glutamate. It participates in amino-acid biosynthesis; L-serine biosynthesis; L-serine from 3-phospho-D-glycerate: step 2/3. Its pathway is cofactor biosynthesis; pyridoxine 5'-phosphate biosynthesis; pyridoxine 5'-phosphate from D-erythrose 4-phosphate: step 3/5. In terms of biological role, catalyzes the reversible conversion of 3-phosphohydroxypyruvate to phosphoserine and of 3-hydroxy-2-oxo-4-phosphonooxybutanoate to phosphohydroxythreonine. In Phocaeicola vulgatus (strain ATCC 8482 / DSM 1447 / JCM 5826 / CCUG 4940 / NBRC 14291 / NCTC 11154) (Bacteroides vulgatus), this protein is Phosphoserine aminotransferase.